The following is a 102-amino-acid chain: Co-chaperonin GroES (102 aa).

Belongs to the GroES chaperonin family. In terms of assembly, heptamer of 7 subunits arranged in a ring. Interacts with the chaperonin GroEL.

The protein localises to the cytoplasm. Together with the chaperonin GroEL, plays an essential role in assisting protein folding. The GroEL-GroES system forms a nano-cage that allows encapsulation of the non-native substrate proteins and provides a physical environment optimized to promote and accelerate protein folding. GroES binds to the apical surface of the GroEL ring, thereby capping the opening of the GroEL channel. The sequence is that of Co-chaperonin GroES from Vibrio harveyi (Beneckea harveyi).